Consider the following 520-residue polypeptide: RNA polymerase sigma factor sigA (520 aa).

The transit peptide at 1-66 directs the protein to the chloroplast; the sequence is MTATPAVIGL…APATPKLTAV (66 aa). A compositionally biased stretch (gly residues) spans 37–49; it reads GGGGGGGGGGGGD. Disordered stretches follow at residues 37-57, 87-117, and 171-190; these read GGGG…APPA, HHSS…AHAH, and SVSA…TKNG. A compositionally biased stretch (pro residues) spans 96 to 108; the sequence is APPPPPPPPPTPS. A compositionally biased stretch (basic residues) spans 175–187; it reads RQRRMSGRRRGRT. The Polymerase core binding signature appears at 305–318; sequence DLIQGGLIGLLRGI. Positions 479–498 form a DNA-binding region, H-T-H motif; sequence WEDISRQFGLSRERVRQVGL.

It belongs to the sigma-70 factor family. Expressed in shoots. Expressed in the tips of fully elongated leaves. Expressed in leaf blades.

The protein resides in the plastid. Its subcellular location is the chloroplast. Functionally, sigma factors are initiation factors that promote the attachment of plastid-encoded RNA polymerase (PEP) to specific initiation sites and are then released. Controls the transcription of the psaA and psaB genes in chloroplast, and thus maintains the abundance of the core protein complex PsaA-PsaB of photosystem I (PSI) in the thylakoid membrane. Maintains PSI activity, sufficient rate of electron transfer from PSII to PSI, and photochemical efficiency. The sequence is that of RNA polymerase sigma factor sigA from Oryza sativa subsp. japonica (Rice).